A 359-amino-acid chain; its full sequence is UDP-3-O-acylglucosamine N-acyltransferase (359 aa).

The Proton acceptor role is filled by His-248.

It belongs to the transferase hexapeptide repeat family. LpxD subfamily. Homotrimer.

The enzyme catalyses a UDP-3-O-[(3R)-3-hydroxyacyl]-alpha-D-glucosamine + a (3R)-hydroxyacyl-[ACP] = a UDP-2-N,3-O-bis[(3R)-3-hydroxyacyl]-alpha-D-glucosamine + holo-[ACP] + H(+). It participates in bacterial outer membrane biogenesis; LPS lipid A biosynthesis. Catalyzes the N-acylation of UDP-3-O-acylglucosamine using 3-hydroxyacyl-ACP as the acyl donor. Is involved in the biosynthesis of lipid A, a phosphorylated glycolipid that anchors the lipopolysaccharide to the outer membrane of the cell. The polypeptide is UDP-3-O-acylglucosamine N-acyltransferase (Chlamydia abortus (strain DSM 27085 / S26/3) (Chlamydophila abortus)).